We begin with the raw amino-acid sequence, 556 residues long: 2-succinyl-5-enolpyruvyl-6-hydroxy-3-cyclohexene-1-carboxylate synthase (556 aa).

This sequence belongs to the TPP enzyme family. MenD subfamily. In terms of assembly, homodimer. It depends on Mg(2+) as a cofactor. Requires Mn(2+) as cofactor. Thiamine diphosphate serves as cofactor.

The catalysed reaction is isochorismate + 2-oxoglutarate + H(+) = 5-enolpyruvoyl-6-hydroxy-2-succinyl-cyclohex-3-ene-1-carboxylate + CO2. The protein operates within quinol/quinone metabolism; 1,4-dihydroxy-2-naphthoate biosynthesis; 1,4-dihydroxy-2-naphthoate from chorismate: step 2/7. It participates in quinol/quinone metabolism; menaquinone biosynthesis. In terms of biological role, catalyzes the thiamine diphosphate-dependent decarboxylation of 2-oxoglutarate and the subsequent addition of the resulting succinic semialdehyde-thiamine pyrophosphate anion to isochorismate to yield 2-succinyl-5-enolpyruvyl-6-hydroxy-3-cyclohexene-1-carboxylate (SEPHCHC). This is 2-succinyl-5-enolpyruvyl-6-hydroxy-3-cyclohexene-1-carboxylate synthase from Escherichia coli O45:K1 (strain S88 / ExPEC).